Here is a 311-residue protein sequence, read N- to C-terminus: Apulose-4-phosphate transketolase subunit B (311 aa).

The protein belongs to the transketolase family. Probable heterodimer composed of AptA and AptB. Thiamine diphosphate is required as a cofactor.

It catalyses the reaction apulose 4-phosphate + D-glyceraldehyde 3-phosphate = D-xylulose 5-phosphate + dihydroxyacetone phosphate. Its pathway is carbohydrate metabolism. Functionally, involved in catabolism of D-apiose. Catalyzes the transfer of the glycolaldehyde group from apulose-4-phosphate to D-glyceraldehyde 3-phosphate, generating dihydroxyacetone phosphate and D-xylulose-5-phosphate. The protein is Apulose-4-phosphate transketolase subunit B of Actinobacillus succinogenes (strain ATCC 55618 / DSM 22257 / CCUG 43843 / 130Z).